Reading from the N-terminus, the 217-residue chain is Peptide methionine sulfoxide reductase MsrA (217 aa).

C54 is an active-site residue.

The protein belongs to the MsrA Met sulfoxide reductase family.

It carries out the reaction L-methionyl-[protein] + [thioredoxin]-disulfide + H2O = L-methionyl-(S)-S-oxide-[protein] + [thioredoxin]-dithiol. The enzyme catalyses [thioredoxin]-disulfide + L-methionine + H2O = L-methionine (S)-S-oxide + [thioredoxin]-dithiol. Functionally, has an important function as a repair enzyme for proteins that have been inactivated by oxidation. Catalyzes the reversible oxidation-reduction of methionine sulfoxide in proteins to methionine. This is Peptide methionine sulfoxide reductase MsrA from Maricaulis maris (strain MCS10) (Caulobacter maris).